The chain runs to 1077 residues: Bifunctional helicase and thymine dioxygenase JBP2 (1077 aa).

The tract at residues 1 to 516 (MPMFMDGASQ…PPLCIPFKIA (516 aa)) is thymine dioxygenase. The Fe cation site is built by H391, D393, and H441. Residue R455 coordinates 2-oxoglutarate. The DNA Helicase stretch occupies residues 517 to 1075 (KTLSLTQHAA…RNIDTVKSER (559 aa)). One can recognise a Helicase ATP-binding domain in the interval 531 to 706 (SRRIKEGDGC…YRLVGWVDDK (176 aa)). 544–551 (LTMGLGKT) is an ATP binding site. The DEAH box signature appears at 657–660 (DEGH). The Helicase C-terminal domain maps to 871–1032 (KLTALISILH…QVVPGHDLVD (162 aa)).

This sequence in the C-terminal section; belongs to the SNF2/RAD54 helicase family. The protein in the N-terminal section; belongs to the TET family. JBP2 subfamily. Requires Fe(2+) as cofactor.

Its subcellular location is the nucleus. It catalyses the reaction ATP + H2O = ADP + phosphate + H(+). It carries out the reaction thymine + 2-oxoglutarate + O2 = 5-hydroxymethyluracil + succinate + CO2. Its function is as follows. Dioxygenase that catalyzes the first step of DNA base J (beta-d-glucosyl-HOMedU) biosynthesis by converting thymine to 5-hydroxymethyluracil (HOMedU). DNA base J is a hypermodified thymidine residue found in the genome of kinetoplastid parasites, which is localized primarily to repetitive DNA, namely the telomeres, and is implicated in the regulation of antigenic variation. Probably also acts as a DNA helicase. Recognizes and binds specific regions of the genome, hydrolyzes ATP and allows the DNA base J de novo synthesis. Involved in initial synthesis of DNA base J, JBP1 being able to act via the basal level of DNA base J and propagate further synthesis. In contrast to JBP1, it does not specifically bind DNA base J, however it binds chromatin. The polypeptide is Bifunctional helicase and thymine dioxygenase JBP2 (JBP2) (Trypanosoma brucei brucei (strain 927/4 GUTat10.1)).